We begin with the raw amino-acid sequence, 369 residues long: Histidinol-phosphate aminotransferase (369 aa).

Residues 1 to 39 (MSFGIDDLPVRDELRGKSPYGAPQLDVPVRLNTNENPYP) are disordered. Lys230 is subject to N6-(pyridoxal phosphate)lysine.

It belongs to the class-II pyridoxal-phosphate-dependent aminotransferase family. Histidinol-phosphate aminotransferase subfamily. As to quaternary structure, homodimer. Pyridoxal 5'-phosphate is required as a cofactor.

The enzyme catalyses L-histidinol phosphate + 2-oxoglutarate = 3-(imidazol-4-yl)-2-oxopropyl phosphate + L-glutamate. It participates in amino-acid biosynthesis; L-histidine biosynthesis; L-histidine from 5-phospho-alpha-D-ribose 1-diphosphate: step 7/9. In Streptomyces avermitilis (strain ATCC 31267 / DSM 46492 / JCM 5070 / NBRC 14893 / NCIMB 12804 / NRRL 8165 / MA-4680), this protein is Histidinol-phosphate aminotransferase (hisC).